A 536-amino-acid chain; its full sequence is CTP synthase (536 aa).

An amidoligase domain region spans residues 1 to 267 (MSKFVFVTGG…CKETLKYLEL (267 aa)). Ser-13 serves as a coordination point for CTP. Residue Ser-13 participates in UTP binding. ATP contacts are provided by residues 14–19 (SIGKGI) and Asp-71. Asp-71 and Glu-141 together coordinate Mg(2+). CTP contacts are provided by residues 148–150 (DIE), 188–193 (KTKPTQ), and Lys-224. UTP contacts are provided by residues 188-193 (KTKPTQ) and Lys-224. The 243-residue stretch at 292 to 534 (KVALVGKYIE…IKASQEKLTQ (243 aa)) folds into the Glutamine amidotransferase type-1 domain. Gly-354 serves as a coordination point for L-glutamine. Residue Cys-381 is the Nucleophile; for glutamine hydrolysis of the active site. L-glutamine-binding positions include 382 to 385 (LGMQ), Glu-405, and Arg-462. Catalysis depends on residues His-507 and Glu-509.

Belongs to the CTP synthase family. In terms of assembly, homotetramer.

It catalyses the reaction UTP + L-glutamine + ATP + H2O = CTP + L-glutamate + ADP + phosphate + 2 H(+). It carries out the reaction L-glutamine + H2O = L-glutamate + NH4(+). The enzyme catalyses UTP + NH4(+) + ATP = CTP + ADP + phosphate + 2 H(+). The protein operates within pyrimidine metabolism; CTP biosynthesis via de novo pathway; CTP from UDP: step 2/2. Its activity is regulated as follows. Allosterically activated by GTP, when glutamine is the substrate; GTP has no effect on the reaction when ammonia is the substrate. The allosteric effector GTP functions by stabilizing the protein conformation that binds the tetrahedral intermediate(s) formed during glutamine hydrolysis. Inhibited by the product CTP, via allosteric rather than competitive inhibition. Catalyzes the ATP-dependent amination of UTP to CTP with either L-glutamine or ammonia as the source of nitrogen. Regulates intracellular CTP levels through interactions with the four ribonucleotide triphosphates. The chain is CTP synthase from Prochlorococcus marinus (strain MIT 9215).